Here is an 876-residue protein sequence, read N- to C-terminus: Alanine--tRNA ligase (876 aa).

Zn(2+) contacts are provided by histidine 565, histidine 569, cysteine 667, and histidine 671.

The protein belongs to the class-II aminoacyl-tRNA synthetase family. Requires Zn(2+) as cofactor.

It is found in the cytoplasm. It catalyses the reaction tRNA(Ala) + L-alanine + ATP = L-alanyl-tRNA(Ala) + AMP + diphosphate. Catalyzes the attachment of alanine to tRNA(Ala) in a two-step reaction: alanine is first activated by ATP to form Ala-AMP and then transferred to the acceptor end of tRNA(Ala). Also edits incorrectly charged Ser-tRNA(Ala) and Gly-tRNA(Ala) via its editing domain. This chain is Alanine--tRNA ligase, found in Staphylococcus aureus (strain USA300).